The following is a 436-amino-acid chain: MSVDWRTEIYSGDISLVEKLIKNKGNCINISVEETTTPLIDAIRTGNAKIVELFIKHGAQVNHVNTKIPNPLLTAIKIGSHDIVKLLLINGVDTSILPVPCINKEMIKTILDSGVKVNTKNAKSKTFLHYAIKNNDLEVIKMLFEYGADVNIKDDNGCYPIHIATRSNSYEIIKLLLEKGAYANVKDNYGNSPLHNAAKYGDYACIKLVLDHTNNISNKCNNGVTPLHNAILYNRSAVELLINNRSINDTDVDGYTPLHYALQPPCSIDIIDILLYNNADISIKDNNGRNPIDTAFKYINRDSVIKELLANAVLINEVGKLKDTTILEHKEIKDNTVFSNFVYECNEEIKKMKKTKCVGDYSMFDVYMIRYKHKYDGNKDSIKDYLRCLDDNSTRMLKTIDINEFPIYSMYLVRCLYEYGNILKEMGSCIHNRYKK.

ANK repeat units follow at residues 1 to 30 (MSVD…CINI), 34 to 63 (ETTT…QVNH), 67 to 96 (KIPN…DTSI), 98 to 119 (PVPC…KVNT), 123 to 152 (KSKT…DVNI), 156 to 185 (NGCY…YANV), 189 to 218 (YGNS…NISN), 222 to 252 (NGVT…DTDV), 253 to 283 (DGYT…DISI), and 287 to 317 (NGRN…LINE).

The chain is Putative ankyrin repeat protein FPV245 from Vertebrata (FPV).